A 210-amino-acid chain; its full sequence is Uridine kinase P10 (210 aa).

Position 10–18 (10–18) interacts with ATP; it reads GISGSGKST. Asp41 is a catalytic residue.

Belongs to the uridine kinase family. In terms of assembly, interacts with host eIF-2B; this interaction disrupts the interaction between eIF2 and eIF-2B, which leads to the inhibition of stress granules formation.

Its subcellular location is the host cytoplasm. It is found in the host perinuclear region. The enzyme catalyses uridine + ATP = UMP + ADP + H(+). Functionally, inhibits the integrated stress response (ISR) in the infected cell by preventing the sequestration of eIF2B by phosphorylated EIF2S1/eIF-2alpha. Stress granule formation in response to EIF2S1/eIF-2alpha phosphorylation is thus inhibited, which allows protein synthesis and viral replication. Phosphorylates uridine to uridine monophosphate. The polypeptide is Uridine kinase P10 (ORF10) (Beluga whale coronavirus (strain SW1) (BwCoV)).